The following is a 357-amino-acid chain: Probable GTP 3',8-cyclase (357 aa).

The region spanning 5 to 234 is the Radical SAM core domain; it reads DFGRDVSGVR…DRRRYWVSSR (230 aa). Position 14 (arginine 14) interacts with GTP. Positions 21 and 25 each coordinate [4Fe-4S] cluster. Tyrosine 27 contacts S-adenosyl-L-methionine. Cysteine 28 contributes to the [4Fe-4S] cluster binding site. Residue lysine 68 participates in GTP binding. Glycine 72 is a binding site for S-adenosyl-L-methionine. A GTP-binding site is contributed by threonine 96. S-adenosyl-L-methionine is bound at residue serine 120. Lysine 157 contributes to the GTP binding site. The interval 232 to 256 is disordered; it reads SSRDAGSTADDAAQSVTPDGGAHPD. Cysteine 272 and cysteine 275 together coordinate [4Fe-4S] cluster. 277–279 lines the GTP pocket; that stretch reads RVR. Cysteine 289 provides a ligand contact to [4Fe-4S] cluster.

Belongs to the radical SAM superfamily. MoaA family. [4Fe-4S] cluster serves as cofactor.

The enzyme catalyses GTP + AH2 + S-adenosyl-L-methionine = (8S)-3',8-cyclo-7,8-dihydroguanosine 5'-triphosphate + 5'-deoxyadenosine + L-methionine + A + H(+). The protein operates within cofactor biosynthesis; molybdopterin biosynthesis. Its function is as follows. Catalyzes the cyclization of GTP to (8S)-3',8-cyclo-7,8-dihydroguanosine 5'-triphosphate. The chain is Probable GTP 3',8-cyclase from Halobacterium salinarum (strain ATCC 29341 / DSM 671 / R1).